Consider the following 70-residue polypeptide: Cold shock-like protein CspJ (70 aa).

In terms of domain architecture, CSD spans 7–67 (GLVKWFNPEK…GPKGPSAVNV (61 aa)).

The protein resides in the cytoplasm. The chain is Cold shock-like protein CspJ (cspJ) from Salmonella typhimurium (strain SL1344).